Here is a 1438-residue protein sequence, read N- to C-terminus: Membrane-anchored lipid-binding protein YSP2 (1438 aa).

A compositionally biased stretch (basic and acidic residues) spans 1–17 (MRDEATRKKRSFSDGHF). Disordered regions lie at residues 1 to 97 (MRDE…SHTP), 174 to 194 (KVKH…NERP), 200 to 219 (QKDD…SAPN), 285 to 308 (QQQH…QNPN), 338 to 418 (TSGP…KVKF), 455 to 485 (DENN…LGPK), and 505 to 543 (SQSN…RYSS). The Cytoplasmic portion of the chain corresponds to 1 to 1277 (MRDEATRKKR…SAFSMLQQVN (1277 aa)). At S13 the chain carries Phosphoserine. Over residues 18-29 (FKKLKLMSRKKQ) the composition is skewed to basic residues. A compositionally biased stretch (basic and acidic residues) spans 30–44 (PVMERSKTTRTRKES). The segment covering 45-58 (TNSAAKSSLSLRRA) has biased composition (low complexity). Residues 74-97 (IGSTNEGVAGNSGSNSPAQYSHTP) show a composition bias toward polar residues. Low complexity-rich tracts occupy residues 286–298 (QQHP…GPLP) and 374–398 (PTNT…ANSN). S411 carries the phosphoserine modification. The segment covering 455–470 (DENNTNNNPNASSTNL) has biased composition (low complexity). Polar residues predominate over residues 471–485 (SHISKSNVNNNLGPK). A Phosphoserine modification is found at S596. Residues 648-716 (EFHTLFKDCD…KEIVQIEKKT (69 aa)) form the GRAM domain. A disordered region spans residues 777–843 (SSSAFFDDSD…LGPNKHSPTT (67 aa)). Positions 783–800 (DDSDDNDDDGDLDDDDPD) are enriched in acidic residues. The segment covering 818–832 (NESNDLGKNQKSTNY) has biased composition (polar residues). A VASt 1 domain is found at 851-1018 (NDHLVIEANI…EIKKILSDED (168 aa)). S1032 is modified (phosphoserine). A VASt 2 domain is found at 1059–1225 (DDTVIDEKIN…DLKKIISNAS (167 aa)). A disordered region spans residues 1225–1257 (SSTKKKSRRRGKTVNKRKSSPSTIKNEKNEENF). A compositionally biased stretch (basic residues) spans 1227–1243 (TKKKSRRRGKTVNKRKS). The chain crosses the membrane as a helical span at residues 1278 to 1298 (ITSVQGIMTIISFFICLIFFF). Residues 1299–1438 (RLLFHSKNTS…DNTSATNQLL (140 aa)) lie on the Lumenal side of the membrane. Residues N1306, N1373, and N1430 are each glycosylated (N-linked (GlcNAc...) asparagine).

It belongs to the YSP2 family.

The protein localises to the mitochondrion membrane. It is found in the endoplasmic reticulum membrane. Involved in induction of programmed cell death in response to reactive oxygen species (ROS). May be involved in sterol transfer between intracellular membranes. The sequence is that of Membrane-anchored lipid-binding protein YSP2 from Saccharomyces cerevisiae (strain ATCC 204508 / S288c) (Baker's yeast).